The chain runs to 344 residues: Dimethyladenosine transferase 1, mitochondrial (344 aa).

Residues 1 to 27 (MATPGALAKFRLPPLPTIGEIVKLFNL) constitute a mitochondrion transit peptide. Positions 36, 38, 63, 85, 86, 111, 112, and 141 each coordinate S-adenosyl-L-methionine.

The protein belongs to the class I-like SAM-binding methyltransferase superfamily. rRNA adenine N(6)-methyltransferase family. KsgA subfamily.

The protein resides in the mitochondrion. The enzyme catalyses adenosine(N)/adenosine(N+1) in rRNA + 4 S-adenosyl-L-methionine = N(6)-dimethyladenosine(N)/N(6)-dimethyladenosine(N+1) in rRNA + 4 S-adenosyl-L-homocysteine + 4 H(+). Mitochondrial methyltransferase which uses S-adenosyl methionine to dimethylate two highly conserved adjacent adenosine residues (A1583 and A1584) within the loop of helix 45 at the 3-prime end of 12S rRNA, thereby regulating the assembly or stability of the small subunit of the mitochondrial ribosome. Also required for basal transcription of mitochondrial DNA, probably via its interaction with POLRMT and TFAM. Stimulates transcription independently of the methyltransferase activity. The protein is Dimethyladenosine transferase 1, mitochondrial (tfb1m.L) of Xenopus laevis (African clawed frog).